The following is a 294-amino-acid chain: tRNA pseudouridine synthase B (294 aa).

Asp39 acts as the Nucleophile in catalysis.

The protein belongs to the pseudouridine synthase TruB family. Type 1 subfamily.

It catalyses the reaction uridine(55) in tRNA = pseudouridine(55) in tRNA. In terms of biological role, responsible for synthesis of pseudouridine from uracil-55 in the psi GC loop of transfer RNAs. This is tRNA pseudouridine synthase B from Streptococcus pyogenes serotype M28 (strain MGAS6180).